The chain runs to 583 residues: ATP-dependent lipid A-core flippase (583 aa).

Helical transmembrane passes span 27 to 47, 69 to 89, 142 to 162, 165 to 185, and 249 to 269; these read LAVA…MVSL, LLVF…TYCL, ALVS…LMFY, WQLS…IGFV, and AAAN…VLYL. Residues 28–310 enclose the ABC transmembrane type-1 domain; it reads AVAVVALIIN…LTNVTSQFQR (283 aa). Residues 342–578 enclose the ABC transporter domain; it reads VNVKDISFTY…DGAYAQLHRI (237 aa). Residue 376–383 participates in ATP binding; the sequence is GRSGSGKS.

Belongs to the ABC transporter superfamily. Lipid exporter (TC 3.A.1.106) family. In terms of assembly, homodimer.

The protein resides in the cell inner membrane. It catalyses the reaction ATP + H2O + lipid A-core oligosaccharideSide 1 = ADP + phosphate + lipid A-core oligosaccharideSide 2.. Its function is as follows. Involved in lipopolysaccharide (LPS) biosynthesis. Translocates lipid A-core from the inner to the outer leaflet of the inner membrane. Transmembrane domains (TMD) form a pore in the inner membrane and the ATP-binding domain (NBD) is responsible for energy generation. The sequence is that of ATP-dependent lipid A-core flippase from Vibrio vulnificus (strain CMCP6).